The primary structure comprises 333 residues: MFFMNFKYHWFIYFLITIFVLMMNSNNIFIQWMLMEFGTIISISLINIKSTNKTPSLIYYSVSVISSIFLFFMIIVYLSSISFTKTDTFNFMVQMMFFLKIGTFPFHFWMIYSYEMMNWKQIFLMSTLIKFIPIYMMVSMTKINSWTLYFLITNSLYISFYANKFYTLKKLLACSTIFNSFYFIFILELNKNMFIAMIILYSFNYFLLISFLNKFNIQNFNFMFYNKYQMYTFLTLMFNYSMYPIFLSFVIKWNLIFMMVSVKAYNWILFLLMISSMLMIWNYIIILKRVFLKMNFYKNNFIDDKDNKYMYHSYFALTLLSFNISFFITLNFL.

Transmembrane regions (helical) follow at residues 10-30, 57-77, 91-111, 121-141, 143-163, 170-190, 192-212, 242-262, 267-287, and 313-333; these read WFIYFLITIFVLMMNSNNIFI, LIYYSVSVISSIFLFFMIIVY, FMVQMMFFLKIGTFPFHFWMI, QIFLMSTLIKFIPIYMMVSMT, INSWTLYFLITNSLYISFYAN, KLLACSTIFNSFYFIFILELN, NMFIAMIILYSFNYFLLISFL, MYPIFLSFVIKWNLIFMMVSV, WILFLLMISSMLMIWNYIIIL, and SYFALTLLSFNISFFITLNFL.

Belongs to the complex I subunit 2 family.

It localises to the mitochondrion inner membrane. The enzyme catalyses a ubiquinone + NADH + 5 H(+)(in) = a ubiquinol + NAD(+) + 4 H(+)(out). Its function is as follows. Core subunit of the mitochondrial membrane respiratory chain NADH dehydrogenase (Complex I) that is believed to belong to the minimal assembly required for catalysis. Complex I functions in the transfer of electrons from NADH to the respiratory chain. The immediate electron acceptor for the enzyme is believed to be ubiquinone. This Apis mellifera ligustica (Common honeybee) protein is NADH-ubiquinone oxidoreductase chain 2 (ND2).